The following is a 1940-amino-acid chain: Myosin-3 (1940 aa).

One can recognise a Myosin N-terminal SH3-like domain in the interval 33–82 (DAKTYCFVVDSKEEYAKGKIKSSQDGKVTVETEDNRTLVVKPEDVYAMNP). Positions 86 to 779 (DRIEDMAMLT…LLGTLEEMRD (694 aa)) constitute a Myosin motor domain. Position 130 is an N6,N6,N6-trimethyllysine (Lys130). Residue 179–186 (GESGAGKT) participates in ATP binding. 2 actin-binding regions span residues 656–678 (LNKL…IPNE) and 758–772 (KFGH…GLLG). The IQ domain maps to 782–811 (LAKLITRTQAVCRGFLMRVEFQKMVQRRES). Residues 840 to 1933 (LLKSAETEKE…KTRDFTSSRM (1094 aa)) are a coiled coil.

It belongs to the TRAFAC class myosin-kinesin ATPase superfamily. Myosin family. In terms of assembly, muscle myosin is a hexameric protein that consists of 2 heavy chain subunits (MHC), 2 alkali light chain subunits (MLC) and 2 regulatory light chain subunits (MLC-2). In terms of tissue distribution, expressed in fetal bone, thymus, placenta, heart, brain, and liver.

It is found in the cytoplasm. It localises to the myofibril. In terms of biological role, muscle contraction. The sequence is that of Myosin-3 (MYH3) from Homo sapiens (Human).